Consider the following 1002-residue polypeptide: BTB/POZ domain-containing protein At1g04390 (1002 aa).

2 consecutive BTB domains span residues 680-758 and 808-889; these read SDMR…EVES and SDVI…PKPP.

Its pathway is protein modification; protein ubiquitination. Its function is as follows. May act as a substrate-specific adapter of an E3 ubiquitin-protein ligase complex (CUL3-RBX1-BTB) which mediates the ubiquitination and subsequent proteasomal degradation of target proteins. This chain is BTB/POZ domain-containing protein At1g04390, found in Arabidopsis thaliana (Mouse-ear cress).